Reading from the N-terminus, the 209-residue chain is Thymidylate kinase (209 aa).

Residue 10-17 participates in ATP binding; sequence GLDGAGKS.

The protein belongs to the thymidylate kinase family.

The enzyme catalyses dTMP + ATP = dTDP + ADP. In terms of biological role, phosphorylation of dTMP to form dTDP in both de novo and salvage pathways of dTTP synthesis. This Francisella tularensis subsp. holarctica (strain OSU18) protein is Thymidylate kinase.